Consider the following 96-residue polypeptide: Co-chaperonin GroES (96 aa).

This sequence belongs to the GroES chaperonin family. In terms of assembly, heptamer of 7 subunits arranged in a ring. Interacts with the chaperonin GroEL.

The protein resides in the cytoplasm. Together with the chaperonin GroEL, plays an essential role in assisting protein folding. The GroEL-GroES system forms a nano-cage that allows encapsulation of the non-native substrate proteins and provides a physical environment optimized to promote and accelerate protein folding. GroES binds to the apical surface of the GroEL ring, thereby capping the opening of the GroEL channel. The protein is Co-chaperonin GroES of Syntrophomonas wolfei subsp. wolfei (strain DSM 2245B / Goettingen).